Consider the following 361-residue polypeptide: Beta-hexosaminidase (361 aa).

Substrate is bound by residues Asp-69, Arg-77, Arg-144, and 174–175 (KH). His-187 acts as the Proton donor/acceptor in catalysis. Asp-258 acts as the Nucleophile in catalysis.

This sequence belongs to the glycosyl hydrolase 3 family. NagZ subfamily.

It is found in the cytoplasm. It carries out the reaction Hydrolysis of terminal non-reducing N-acetyl-D-hexosamine residues in N-acetyl-beta-D-hexosaminides.. Its pathway is cell wall biogenesis; peptidoglycan recycling. Plays a role in peptidoglycan recycling by cleaving the terminal beta-1,4-linked N-acetylglucosamine (GlcNAc) from peptide-linked peptidoglycan fragments, giving rise to free GlcNAc, anhydro-N-acetylmuramic acid and anhydro-N-acetylmuramic acid-linked peptides. This chain is Beta-hexosaminidase, found in Neisseria meningitidis serogroup B (strain ATCC BAA-335 / MC58).